The sequence spans 319 residues: Epoxyqueuosine reductase (319 aa).

Asp-146 functions as the Proton donor in the catalytic mechanism. The 4Fe-4S ferredoxin-type domain occupies 188-220 (ASLPADQPARSLCGHCQRCLPACPTAAITEPFV). [4Fe-4S] cluster-binding residues include Cys-200, Cys-203, Cys-206, Cys-210, Cys-226, Cys-250, Cys-253, and Cys-257.

The protein belongs to the QueG family. Monomer. Cob(II)alamin is required as a cofactor. Requires [4Fe-4S] cluster as cofactor.

The protein localises to the cytoplasm. The enzyme catalyses epoxyqueuosine(34) in tRNA + AH2 = queuosine(34) in tRNA + A + H2O. Its pathway is tRNA modification; tRNA-queuosine biosynthesis. Catalyzes the conversion of epoxyqueuosine (oQ) to queuosine (Q), which is a hypermodified base found in the wobble positions of tRNA(Asp), tRNA(Asn), tRNA(His) and tRNA(Tyr). This chain is Epoxyqueuosine reductase, found in Synechococcus sp. (strain RCC307).